The chain runs to 68 residues: Purkinje cell protein 4-like protein 1 (68 aa).

Residues 1–16 (MSELNTKTSPATNQAA) are compositionally biased toward polar residues. The interval 1-45 (MSELNTKTSPATNQAAGQEEKGKAGNVKKAEEEEEIDIDLTAPET) is disordered. T8 carries the post-translational modification Phosphothreonine. The span at 18-31 (QEEKGKAGNVKKAE) shows a compositional bias: basic and acidic residues. The IQ domain maps to 45–68 (TEKAALAIQGKFRRFQKRKKDPSS).

This sequence belongs to the PCP4 family.

The protein is Purkinje cell protein 4-like protein 1 (PCP4L1) of Homo sapiens (Human).